Reading from the N-terminus, the 495-residue chain is 3-octaprenyl-4-hydroxybenzoate carboxy-lyase (495 aa).

Residue asparagine 172 participates in Mn(2+) binding. Prenylated FMN-binding positions include 175–177 (IYR), 189–191 (RWL), and 194–195 (RG). Glutamate 238 serves as a coordination point for Mn(2+). Aspartate 287 serves as the catalytic Proton donor.

The protein belongs to the UbiD family. Homohexamer. The cofactor is prenylated FMN. It depends on Mn(2+) as a cofactor.

The protein resides in the cell membrane. It carries out the reaction a 4-hydroxy-3-(all-trans-polyprenyl)benzoate + H(+) = a 2-(all-trans-polyprenyl)phenol + CO2. It participates in cofactor biosynthesis; ubiquinone biosynthesis. Functionally, catalyzes the decarboxylation of 3-octaprenyl-4-hydroxy benzoate to 2-octaprenylphenol, an intermediate step in ubiquinone biosynthesis. In Edwardsiella ictaluri (strain 93-146), this protein is 3-octaprenyl-4-hydroxybenzoate carboxy-lyase.